The following is a 262-amino-acid chain: Mitochondrial calcium uniporter regulator 1 (262 aa).

The stretch at 138–175 forms a coiled coil; it reads EKSEFSALRTQNEKVKIELQQLKKQLNDSIVKVRASNK. The chain crosses the membrane as a helical span at residues 239-261; that stretch reads TIKYLAGSVFTCLTIALGFYRLW.

It belongs to the CCDC90 family.

It localises to the mitochondrion inner membrane. In terms of biological role, key regulator of mitochondrial calcium uniporter (mcu) required for calcium entry into mitochondrion. The polypeptide is Mitochondrial calcium uniporter regulator 1 (Xenopus tropicalis (Western clawed frog)).